We begin with the raw amino-acid sequence, 354 residues long: Glutamine synthetase (354 aa).

Residues 22–101 (FHAEYVWIDG…VLSETYNNDG (80 aa)) form the GS beta-grasp domain. Residues 108–354 (HRHHTAKVME…IIIETTILDK (247 aa)) enclose the GS catalytic domain.

Belongs to the glutamine synthetase family. In terms of assembly, homooctamer.

It is found in the cytoplasm. The enzyme catalyses L-glutamate + NH4(+) + ATP = L-glutamine + ADP + phosphate + H(+). This Amanita muscaria (Fly agaric) protein is Glutamine synthetase (GLN1).